Here is a 258-residue protein sequence, read N- to C-terminus: Acyl-[acyl-carrier-protein]--UDP-N-acetylglucosamine O-acyltransferase (258 aa).

The protein belongs to the transferase hexapeptide repeat family. LpxA subfamily. Homotrimer.

The protein resides in the cytoplasm. The enzyme catalyses a (3R)-hydroxyacyl-[ACP] + UDP-N-acetyl-alpha-D-glucosamine = a UDP-3-O-[(3R)-3-hydroxyacyl]-N-acetyl-alpha-D-glucosamine + holo-[ACP]. It participates in glycolipid biosynthesis; lipid IV(A) biosynthesis; lipid IV(A) from (3R)-3-hydroxytetradecanoyl-[acyl-carrier-protein] and UDP-N-acetyl-alpha-D-glucosamine: step 1/6. Functionally, involved in the biosynthesis of lipid A, a phosphorylated glycolipid that anchors the lipopolysaccharide to the outer membrane of the cell. This chain is Acyl-[acyl-carrier-protein]--UDP-N-acetylglucosamine O-acyltransferase, found in Halorhodospira halophila (strain DSM 244 / SL1) (Ectothiorhodospira halophila (strain DSM 244 / SL1)).